Here is a 59-residue protein sequence, read N- to C-terminus: Excisionase (59 aa).

Excisionase and integrase are necessary for the excision of prophage from the host genome by site-specific recombination at the att site. The sequence is that of Excisionase (xis) from Staphylococcus phage L54a (Bacteriophage L54a).